The following is a 941-amino-acid chain: RNA-directed RNA polymerase (941 aa).

The interval S875–P918 is disordered. Low complexity predominate over residues M905–P918.

In terms of assembly, forms a ribonucleoprotein complex with the 23S RNA, where a single polymerase molecule binds to a single viral RNA genome. Since the viral RNA is not encapsidated, ribonucleoprotein complex formation appears to be the strategy to survive in the host as persistent virus.

Its subcellular location is the host cytoplasm. It catalyses the reaction RNA(n) + a ribonucleoside 5'-triphosphate = RNA(n+1) + diphosphate. In terms of biological role, RNA-directed RNA polymerase that replicates the viral (+) and (-) genome. This is RNA-directed RNA polymerase from Saccharomyces 23S RNA narnavirus (ScNV-23S).